The sequence spans 315 residues: Initiation factor TFIIB homolog (315 aa).

The protein belongs to the asfivirus C315R family.

In terms of biological role, putative initation factor. This chain is Initiation factor TFIIB homolog, found in African swine fever virus (strain Badajoz 1971 Vero-adapted) (Ba71V).